A 531-amino-acid polypeptide reads, in one-letter code: Light-independent protochlorophyllide reductase subunit B (531 aa).

Asp-36 is a [4Fe-4S] cluster binding site. Asp-296 serves as the catalytic Proton donor. A substrate-binding site is contributed by 431–432 (GM).

Belongs to the ChlB/BchB/BchZ family. Protochlorophyllide reductase is composed of three subunits; ChlL, ChlN and ChlB. Forms a heterotetramer of two ChlB and two ChlN subunits. The cofactor is [4Fe-4S] cluster.

The protein localises to the plastid. The protein resides in the chloroplast. It carries out the reaction chlorophyllide a + oxidized 2[4Fe-4S]-[ferredoxin] + 2 ADP + 2 phosphate = protochlorophyllide a + reduced 2[4Fe-4S]-[ferredoxin] + 2 ATP + 2 H2O. It functions in the pathway porphyrin-containing compound metabolism; chlorophyll biosynthesis (light-independent). Component of the dark-operative protochlorophyllide reductase (DPOR) that uses Mg-ATP and reduced ferredoxin to reduce ring D of protochlorophyllide (Pchlide) to form chlorophyllide a (Chlide). This reaction is light-independent. The NB-protein (ChlN-ChlB) is the catalytic component of the complex. This is Light-independent protochlorophyllide reductase subunit B from Nephroselmis olivacea (Green alga).